Here is a 94-residue protein sequence, read N- to C-terminus: Large ribosomal subunit protein eL42 (94 aa).

Zn(2+)-binding residues include C11, C14, C70, and C73. The segment at 11–73 (CPYCKKHTIH…IDLRFKCTEC (63 aa)) adopts a C4-type zinc-finger fold.

It belongs to the eukaryotic ribosomal protein eL42 family. In terms of assembly, part of the 50S ribosomal subunit. The cofactor is Zn(2+).

In terms of biological role, binds to the 23S rRNA. This is Large ribosomal subunit protein eL42 from Methanocaldococcus jannaschii (strain ATCC 43067 / DSM 2661 / JAL-1 / JCM 10045 / NBRC 100440) (Methanococcus jannaschii).